Consider the following 509-residue polypeptide: MLSRSLLCLALAWVARVGADAPEEEDNVLVLKKSNFAEALAAHNYLLVEFYAPWCGHCKALAPEYAKAAAKLKAEGSEIRLAKVDATEESDLAQQYGVRGYPTIKFFKNGDTASPKEYTAGREADDIVNWLKKRTGPAATTLSDTAAAETLIDSSEVAVIGFFKDVESDSAKQFLLAAEAVDDIPFGITSNSGVFSKYQLDKDGVVLFKKFDEGRNNFEGEVTKEKLLDFIKHNQLPLVIEFTEQTAPKIFGGEIKTHILLFLPKSVSDYDGKLGNFKKAAEGFKGKILFIFIDSDHTDNQRILEFFGLKKEECPAVRLITLEEEMTKYKPESDELTAEKITEFCHRFLEGKIKPHLMSQELPEDWDKQPVKVLVGKNFEEVAFDEKKNVFVEFYAPWCGHCKQLAPIWDKLGETYKDHENIIIAKMDSTANEVEAVKVHSFPTLKFFPATADRTVIDYNGERTLDGFKKFLESGGQDGAGDDDDVDLEEALEPDMEEDDDQKAVKDEL.

Residues 1–19 (MLSRSLLCLALAWVARVGA) form the signal peptide. One can recognise a Thioredoxin 1 domain in the interval 20 to 136 (DAPEEEDNVL…IVNWLKKRTG (117 aa)). Residues C55 and C58 each act as nucleophile in the active site. Cysteines 55 and 58 form a disulfide. K202 carries the N6-acetyllysine modification. An N6-succinyllysine mark is found at K224 and K273. S333 and S359 each carry phosphoserine. In terms of domain architecture, Thioredoxin 2 spans 335–477 (ELTAEKITEF…FKKFLESGGQ (143 aa)). Catalysis depends on nucleophile residues C399 and C402. A disulfide bridge connects residues C399 and C402. Position 429 is a phosphoserine (S429). Positions 473 to 509 (ESGGQDGAGDDDDVDLEEALEPDMEEDDDQKAVKDEL) are disordered. A compositionally biased stretch (acidic residues) spans 480 to 501 (AGDDDDVDLEEALEPDMEEDDD). The Prevents secretion from ER signature appears at 506–509 (KDEL).

The protein belongs to the protein disulfide isomerase family. As to quaternary structure, heterodimer; heterodimerizes with the protein microsomal triglyceride transfer MTTP. Homodimer. Homodimer. Monomers and homotetramers may also occur. Interacts with P4HA2, forming a heterotetramer consisting of 2 alpha subunits (P4HA2) and 2 beta (P4HB), where P4HB plays the role of a structural subunit; this tetramer catalyzes the formation of 4-hydroxyproline in collagen. Also constitutes the structural subunit of the microsomal triacylglycerol transfer protein MTTP in mammalian cells. Stabilizes both enzymes and retain them in the ER without contributing to the catalytic activity. Binds UBQLN1. Interacts with ERO1B. Interacts with ILDR2. Interacts with ERN1/IRE1A (via N-terminus); the interaction is enhanced by phosphorylation of P4HB by FAM20C in response to endoplasmic reticulum stress and results in attenuation of ERN1 activity. Phosphorylation of Ser-359 by FAM20C is induced by endoplasmic reticulum stress and results in a functional switch from oxidoreductase to molecular chaperone. It also promotes interaction with ERN1.

It is found in the endoplasmic reticulum. The protein resides in the endoplasmic reticulum lumen. The protein localises to the melanosome. It localises to the cell membrane. The catalysed reaction is Catalyzes the rearrangement of -S-S- bonds in proteins.. This multifunctional protein catalyzes the formation, breakage and rearrangement of disulfide bonds. At the cell surface, seems to act as a reductase that cleaves disulfide bonds of proteins attached to the cell. May therefore cause structural modifications of exofacial proteins. Inside the cell, seems to form/rearrange disulfide bonds of nascent proteins. At high concentrations and following phosphorylation by FAM20C, functions as a chaperone that inhibits aggregation of misfolded proteins. At low concentrations, facilitates aggregation (anti-chaperone activity). May be involved with other chaperones in the structural modification of the TG precursor in hormone biogenesis. Also acts as a structural subunit of various enzymes such as prolyl 4-hydroxylase and microsomal triacylglycerol transfer protein MTTP. Receptor for LGALS9; the interaction retains P4HB at the cell surface of Th2 T helper cells, increasing disulfide reductase activity at the plasma membrane, altering the plasma membrane redox state and enhancing cell migration. The protein is Protein disulfide-isomerase (P4HB) of Cricetulus griseus (Chinese hamster).